The primary structure comprises 1063 residues: MPTLVVGTPPTCLGDTPQPCHKNSQRQGPFSHGAPGRAADWKAVAKPRLCAPAAEDDVAALRWPGPSQQPDPPWAAPHVVGSDDLKEPGPWGKACSLPMWSTGPEARDGDSSVSSGRLSCSSGGHDVCVSWKERPPQVLGPQQRPRKSDARLEQLRDKIRAQAWQQGSCASLGTSAPSSASRLHKASTLMLRRKGQEAKNPPPAPECSGFSILSAAERRVEAKASHGQGRELSRVSQHQVPVLREKPKRVKSSSCKREKTPKLPSPRRAAKDKHKDEDSELVGVYAWRKGQALVRSLLGPPPVLRRHHSKDPSRDPALTVDLGDSEKVIAAKCSPVCAQLPDATSAYSDQQVSGNTPSLASFDQPATIQTAMAILQDLRQQIQAGLELAQARKGGQELGPSKRRLQDVAGRGCCRDPNAQSSFSKSPWAMTERKHSSLERARSVHTWEPWSSSTARESCPQRAWGAQGQDRSFQRPESPHERLGHFSQRPWSALAGQACSPQRAWGAQRQGPSSQRPGSPPEKRSPFPQQPWSAVATQPCPRRAWTACETWEDPGPRLRNPLERPSPPAQRPWSSSGVQRAGPQGKGRGIGSPVSAAKHALPRPTGSFPQNPLGKEKDTLRPCPRSRGLLGPSHSSESLREFMRQKAQARRRQALEEKASALRTRELRSRRLQEVYRQQREAVLGRAVPVVSRTTPGIVTFVPSSAQSGGLEASGSLESPVLEWSKVTSGMVLGGQEAPGSFCLCLNRAWNHAETLDPPGMGGPQDGRDAPVLLSASPSLGSLELQDLTTRYLPRGMCIYLDPKEAEHLGTSSSLHLRHKQAQLQALETTAKVLKQRVDSLTAKLQGAEALDTVRDPAVGLLRSCPHSLPAAPTLATPTLATPACPGALGPNWGRGAPGEWVSMQPQPLLPPTYFLDGETLSWGPSWEQQQSVSPRAHCESKPRGFPEEGHVDVKPDKRLQRGVAPFQALSPSAGSSYAGPATLHPIWGSLGLEETPSVGGADSVAPCTPRSCGKGDPADRPWAGWSGGRGIHREHLPLPSTRAWPYGVEKSFSTWRASTPRY.

Disordered regions lie at residues M1 to W41, R62 to H184, R219 to D278, P300 to T319, R392 to G484, G496 to P539, and W551 to K658. Low complexity predominate over residues S111–G124. Residues R146 to R160 show a composition bias toward basic and acidic residues. Residues A163–S181 show a composition bias toward polar residues. The span at R219–S233 shows a compositional bias: basic and acidic residues. Basic and acidic residues-rich tracts occupy residues T431–R442 and S472–G484. Residues Q508–P517 are compositionally biased toward low complexity. Positions H816–L851 form a coiled coil. Residues P1010–R1030 are disordered.

This Homo sapiens (Human) protein is Coiled-coil domain-containing protein 187.